A 536-amino-acid polypeptide reads, in one-letter code: MSVAAMTMDDQRPCMNSYDKMPPTKYEQNLNILNSSQNSGATGGPASPTPSGLEDHHHHHHPHPHHHHHQEQQQQQQQQQHLQQQQQQQQQQHAAAVAEAVAAAEQRQRLLEDEIENLKLEQVRMAQQCADAQRREKILMRRLANKEQEFQDYVSQIAEYKAQQAPTALALRTALLDPAVNLLFERLKKELKATKAKLEETQNELSAWKFTPDSNTGKRLMAKCRLLYQENEELGKMTSNGRLAKLETELAMQKSFSEEVKKSQSELDDFLQELDEDVEGMQSTILFLQQELKTTRDRIQTLEKENAQLKQAIKDEVVAPAAATNGGTNTTINKLETIHEDACMANNPTNPDCYNGNTNNEQIAAVPQIPLSDDGSNMNGNAARLARKRNYQEEEALPTVVVVPTPTPVGNNVQEAPPIREVTAPRTLPPKKSKLRGITTRRNSQLEEDHQPVTTPVAVPMIVDNAVAGMASEEAAAAAAAVNNSNTGIIPETGVQVGVPVEGGDPGAPAAPGRILTRRRSVRMQQNGSGAVDYST.

The segment at 1 to 91 is disordered; the sequence is MSVAAMTMDD…LQQQQQQQQQ (91 aa). Residues 28 to 39 are compositionally biased toward low complexity; it reads QNLNILNSSQNS. Residues 57-69 are compositionally biased toward basic residues; that stretch reads HHHHHPHPHHHHH. Over residues 72 to 91 the composition is skewed to low complexity; the sequence is QQQQQQQQQHLQQQQQQQQQ. Positions 254 to 319 form a coiled coil; that stretch reads KSFSEEVKKS…KQAIKDEVVA (66 aa). Residues 424–450 form a disordered region; that stretch reads APRTLPPKKSKLRGITTRRNSQLEEDH.

It belongs to the fl(2)d family. As to quaternary structure, component of the WMM complex, a N6-methyltransferase complex composed of a catalytic subcomplex, named MAC, and of an associated subcomplex, named MACOM. The MAC subcomplex is composed of Ime4/Mettl3 and Mettl14. The MACOM subcomplex is composed of fl(2)d, Flacc/Xio, Hakai, vir, and, in some cases of nito. Interacts with vir and msk. Part of a complex containing fl(2)d, Sxl and vir.

It localises to the nucleus. Functionally, associated component of the WMM complex, a complex that mediates N6-methyladenosine (m6A) methylation of mRNAs, a modification that plays a role in the efficiency of mRNA splicing and is required for sex determination. Required for sex determination and dosage compensation via Sxl alternative splicing: m6A methylation acts as a key regulator of Sxl pre-mRNA and promotes female-specific alternative splicing of Sxl, which determines female physiognomy. M6A methylation is also required for neuronal functions. Required for proper inclusion of regulated exons in Ubx transcripts, leading to isoforms Ia/b and IIa/b. This chain is Pre-mRNA-splicing regulator female-lethal(2)D, found in Drosophila melanogaster (Fruit fly).